The following is a 195-amino-acid chain: HTH-type transcriptional regulator BetI (195 aa).

One can recognise an HTH tetR-type domain in the interval S8–L68. Residues T31–F50 constitute a DNA-binding region (H-T-H motif).

Its pathway is amine and polyamine biosynthesis; betaine biosynthesis via choline pathway [regulation]. In terms of biological role, repressor involved in the biosynthesis of the osmoprotectant glycine betaine. It represses transcription of the choline transporter BetT and the genes of BetAB involved in the synthesis of glycine betaine. This is HTH-type transcriptional regulator BetI from Escherichia coli O17:K52:H18 (strain UMN026 / ExPEC).